The following is a 593-amino-acid chain: Arginine--tRNA ligase (593 aa).

Residues 138-148 (ANPTGPLHVGH) carry the 'HIGH' region motif.

This sequence belongs to the class-I aminoacyl-tRNA synthetase family. Monomer.

It is found in the cytoplasm. The enzyme catalyses tRNA(Arg) + L-arginine + ATP = L-arginyl-tRNA(Arg) + AMP + diphosphate. This Burkholderia ambifaria (strain ATCC BAA-244 / DSM 16087 / CCUG 44356 / LMG 19182 / AMMD) (Burkholderia cepacia (strain AMMD)) protein is Arginine--tRNA ligase.